Reading from the N-terminus, the 659-residue chain is A-type ATP synthase subunit I (659 aa).

8 helical membrane passes run 376-396 (FFFG…IISA), 415-435 (IMLW…SYCG), 460-480 (MIAL…GFIV), 489-509 (GAIF…LFAL), 518-538 (LIVK…EVLA), 542-562 (MAVL…LSYA), 568-588 (ALAT…IWGI), and 590-610 (IASV…GHIF).

It belongs to the V-ATPase 116 kDa subunit family. As to quaternary structure, has multiple subunits with at least A(3), B(3), C, D, E, F, H, I and proteolipid K(x).

The protein localises to the cell membrane. Functionally, component of the A-type ATP synthase that produces ATP from ADP in the presence of a proton gradient across the membrane. This Pyrococcus horikoshii (strain ATCC 700860 / DSM 12428 / JCM 9974 / NBRC 100139 / OT-3) protein is A-type ATP synthase subunit I.